We begin with the raw amino-acid sequence, 379 residues long: Quinolinate synthase (379 aa).

Histidine 60 and serine 81 together coordinate iminosuccinate. Cysteine 126 serves as a coordination point for [4Fe-4S] cluster. Iminosuccinate is bound by residues 152–154 and serine 169; that span reads YAN. Residue cysteine 213 coordinates [4Fe-4S] cluster. Iminosuccinate-binding positions include 239 to 241 and threonine 256; that span reads HPE. Cysteine 310 serves as a coordination point for [4Fe-4S] cluster.

The protein belongs to the quinolinate synthase family. Type 1 subfamily. [4Fe-4S] cluster is required as a cofactor.

The protein localises to the cytoplasm. The enzyme catalyses iminosuccinate + dihydroxyacetone phosphate = quinolinate + phosphate + 2 H2O + H(+). It functions in the pathway cofactor biosynthesis; NAD(+) biosynthesis; quinolinate from iminoaspartate: step 1/1. Catalyzes the condensation of iminoaspartate with dihydroxyacetone phosphate to form quinolinate. This is Quinolinate synthase from Herminiimonas arsenicoxydans.